The sequence spans 439 residues: Amino-acid acetyltransferase (439 aa).

In terms of domain architecture, N-acetyltransferase spans 289-429; it reads EDIRIATVQD…DHYNYQRRSK (141 aa).

It belongs to the acetyltransferase family. ArgA subfamily.

The protein localises to the cytoplasm. The enzyme catalyses L-glutamate + acetyl-CoA = N-acetyl-L-glutamate + CoA + H(+). Its pathway is amino-acid biosynthesis; L-arginine biosynthesis; N(2)-acetyl-L-ornithine from L-glutamate: step 1/4. The protein is Amino-acid acetyltransferase of Mannheimia succiniciproducens (strain KCTC 0769BP / MBEL55E).